The following is a 120-amino-acid chain: Chaperonin GroEL (120 aa).

23–27 (DGTTT) contributes to the ATP binding site.

This sequence belongs to the chaperonin (HSP60) family. As to quaternary structure, forms a cylinder of 14 subunits composed of two heptameric rings stacked back-to-back. Interacts with the co-chaperonin GroES.

The protein localises to the cytoplasm. The enzyme catalyses ATP + H2O + a folded polypeptide = ADP + phosphate + an unfolded polypeptide.. Its function is as follows. Together with its co-chaperonin GroES, plays an essential role in assisting protein folding. The GroEL-GroES system forms a nano-cage that allows encapsulation of the non-native substrate proteins and provides a physical environment optimized to promote and accelerate protein folding. This Mycolicibacterium fallax (Mycobacterium fallax) protein is Chaperonin GroEL.